The primary structure comprises 353 residues: Thiamine-phosphate synthase (353 aa).

A unknown region spans residues 1 to 128 (MESMPVAPST…ARTAAAVRYA (128 aa)). The tract at residues 129–353 (LYDHEVRILE…ASRQLLDLLT (225 aa)) is thiamine-phosphate synthase. Residues 185-189 (QYRRK) and Asn217 contribute to the 4-amino-2-methyl-5-(diphosphooxymethyl)pyrimidine site. Mg(2+) is bound by residues Asp218 and Asp237. Residue Ser256 coordinates 4-amino-2-methyl-5-(diphosphooxymethyl)pyrimidine. 282–284 (TAT) contacts 2-[(2R,5Z)-2-carboxy-4-methylthiazol-5(2H)-ylidene]ethyl phosphate. Lys285 contacts 4-amino-2-methyl-5-(diphosphooxymethyl)pyrimidine. 2-[(2R,5Z)-2-carboxy-4-methylthiazol-5(2H)-ylidene]ethyl phosphate contacts are provided by residues Gly312 and 332–333 (VS).

The protein belongs to the thiamine-phosphate synthase family. Requires Mg(2+) as cofactor.

The enzyme catalyses 2-[(2R,5Z)-2-carboxy-4-methylthiazol-5(2H)-ylidene]ethyl phosphate + 4-amino-2-methyl-5-(diphosphooxymethyl)pyrimidine + 2 H(+) = thiamine phosphate + CO2 + diphosphate. It catalyses the reaction 2-(2-carboxy-4-methylthiazol-5-yl)ethyl phosphate + 4-amino-2-methyl-5-(diphosphooxymethyl)pyrimidine + 2 H(+) = thiamine phosphate + CO2 + diphosphate. The catalysed reaction is 4-methyl-5-(2-phosphooxyethyl)-thiazole + 4-amino-2-methyl-5-(diphosphooxymethyl)pyrimidine + H(+) = thiamine phosphate + diphosphate. Its pathway is cofactor biosynthesis; thiamine diphosphate biosynthesis; thiamine phosphate from 4-amino-2-methyl-5-diphosphomethylpyrimidine and 4-methyl-5-(2-phosphoethyl)-thiazole: step 1/1. Its function is as follows. Condenses 4-methyl-5-(beta-hydroxyethyl)thiazole monophosphate (THZ-P) and 2-methyl-4-amino-5-hydroxymethyl pyrimidine pyrophosphate (HMP-PP) to form thiamine monophosphate (TMP). In Synechococcus sp. (strain WH7803), this protein is Thiamine-phosphate synthase.